We begin with the raw amino-acid sequence, 394 residues long: 3-dehydroquinate synthase (394 aa).

Residues 112-116, 136-137, Lys149, Lys158, and 176-179 contribute to the NAD(+) site; these read GVIGD, TT, and TLAT. Zn(2+) is bound by residues Glu191, His254, and His276. Positions 371-388 are enriched in polar residues; sequence STNQHTTYSPHQHATTKP. Residues 371-394 are disordered; the sequence is STNQHTTYSPHQHATTKPPNRRPH.

The protein belongs to the sugar phosphate cyclases superfamily. Dehydroquinate synthase family. It depends on NAD(+) as a cofactor. Requires Co(2+) as cofactor. The cofactor is Zn(2+).

It localises to the cytoplasm. The catalysed reaction is 7-phospho-2-dehydro-3-deoxy-D-arabino-heptonate = 3-dehydroquinate + phosphate. The protein operates within metabolic intermediate biosynthesis; chorismate biosynthesis; chorismate from D-erythrose 4-phosphate and phosphoenolpyruvate: step 2/7. In terms of biological role, catalyzes the conversion of 3-deoxy-D-arabino-heptulosonate 7-phosphate (DAHP) to dehydroquinate (DHQ). The polypeptide is 3-dehydroquinate synthase (Xylella fastidiosa (strain 9a5c)).